Reading from the N-terminus, the 299-residue chain is Ribosomal protein L11 methyltransferase (299 aa).

4 residues coordinate S-adenosyl-L-methionine: T150, G171, D193, and N234.

This sequence belongs to the methyltransferase superfamily. PrmA family.

Its subcellular location is the cytoplasm. The enzyme catalyses L-lysyl-[protein] + 3 S-adenosyl-L-methionine = N(6),N(6),N(6)-trimethyl-L-lysyl-[protein] + 3 S-adenosyl-L-homocysteine + 3 H(+). In terms of biological role, methylates ribosomal protein L11. This Dictyoglomus turgidum (strain DSM 6724 / Z-1310) protein is Ribosomal protein L11 methyltransferase.